Consider the following 134-residue polypeptide: Small ribosomal subunit protein uS8c (134 aa).

The protein belongs to the universal ribosomal protein uS8 family. As to quaternary structure, part of the 30S ribosomal subunit.

The protein localises to the plastid. Its subcellular location is the chloroplast. Functionally, one of the primary rRNA binding proteins, it binds directly to 16S rRNA central domain where it helps coordinate assembly of the platform of the 30S subunit. This Gossypium barbadense (Sea Island cotton) protein is Small ribosomal subunit protein uS8c (rps8).